The primary structure comprises 304 residues: Ribosomal protein L11 methyltransferase (304 aa).

The S-adenosyl-L-methionine site is built by threonine 156, glycine 177, aspartate 199, and asparagine 240.

It belongs to the methyltransferase superfamily. PrmA family.

It localises to the cytoplasm. It carries out the reaction L-lysyl-[protein] + 3 S-adenosyl-L-methionine = N(6),N(6),N(6)-trimethyl-L-lysyl-[protein] + 3 S-adenosyl-L-homocysteine + 3 H(+). Functionally, methylates ribosomal protein L11. This Symbiobacterium thermophilum (strain DSM 24528 / JCM 14929 / IAM 14863 / T) protein is Ribosomal protein L11 methyltransferase.